The chain runs to 299 residues: CCR4-NOT transcription complex subunit 9 (299 aa).

The residue at position 1 (M1) is an N-acetylmethionine.

The protein belongs to the CNOT9 family. As to quaternary structure, homodimer. Component of the CCR4-NOT complex; distinct complexes seem to exist that differ in the participation of probably mutually exclusive catalytic subunits. Interacts with MYB, ATF2, RARA, RARB, RARG, RXRA, RXRB and RXRG. Identified in a complex with ATF2 bound to target DNA. Interacts with NANOS2. Directly interacts with ZNF335.

The protein localises to the nucleus. It is found in the cytoplasm. The protein resides in the P-body. Functionally, component of the CCR4-NOT complex which is one of the major cellular mRNA deadenylases and is linked to various cellular processes including bulk mRNA degradation, miRNA-mediated repression, translational repression during translational initiation and general transcription regulation. Additional complex functions may be a consequence of its influence on mRNA expression. Involved in down-regulation of MYB- and JUN-dependent transcription. Enhances ligand-dependent transcriptional activity of nuclear hormone receptors. May play a role in cell differentiation. This is CCR4-NOT transcription complex subunit 9 from Bos taurus (Bovine).